We begin with the raw amino-acid sequence, 232 residues long: Ribose-5-phosphate isomerase A (232 aa).

Substrate-binding positions include 28-31 (TGST), 83-86 (DGAD), and 96-99 (KGGG). The Proton acceptor role is filled by glutamate 105. Residue lysine 123 participates in substrate binding.

It belongs to the ribose 5-phosphate isomerase family. In terms of assembly, homodimer.

The catalysed reaction is aldehydo-D-ribose 5-phosphate = D-ribulose 5-phosphate. It participates in carbohydrate degradation; pentose phosphate pathway; D-ribose 5-phosphate from D-ribulose 5-phosphate (non-oxidative stage): step 1/1. Catalyzes the reversible conversion of ribose-5-phosphate to ribulose 5-phosphate. The polypeptide is Ribose-5-phosphate isomerase A (Rhizobium etli (strain CIAT 652)).